We begin with the raw amino-acid sequence, 225 residues long: Large ribosomal subunit protein uL1 (225 aa).

Belongs to the universal ribosomal protein uL1 family. As to quaternary structure, part of the 50S ribosomal subunit.

In terms of biological role, binds directly to 23S rRNA. The L1 stalk is quite mobile in the ribosome, and is involved in E site tRNA release. Protein L1 is also a translational repressor protein, it controls the translation of the L11 operon by binding to its mRNA. The chain is Large ribosomal subunit protein uL1 from Rhodopirellula baltica (strain DSM 10527 / NCIMB 13988 / SH1).